The chain runs to 336 residues: UDP-galactose transporter 1 (336 aa).

9 helical membrane-spanning segments follow: residues 11–31, 38–58, 83–103, 131–151, 154–174, 193–213, 227–247, 254–274, and 278–298; these read LAIL…KWIF, FPLS…YIVI, FVFC…PVSF, IWAS…TELS, MFGF…TILA, APFA…SGIL, IIIL…FYVI, TFNV…WLIF, and ISYM…FYGY.

It belongs to the TPT transporter family. TPT (TC 2.A.7.9) subfamily.

It is found in the membrane. Its function is as follows. Nucleotide sugar transporter that specifically transports UDP-galactose. In Arabidopsis thaliana (Mouse-ear cress), this protein is UDP-galactose transporter 1.